The chain runs to 2454 residues: Probable serine/threonine-protein kinase DDB_G0277071 (2454 aa).

Residues 31 to 51 (TSSLTTTTTTTTTTTTTTSTT) show a composition bias toward low complexity. 6 disordered regions span residues 31–57 (TSSLTTTTTTTTTTTTTTSTTHNHESN), 206–265 (QQQL…QKQN), 340–612 (PRPP…LKIE), 963–1051 (NNIN…NENE), 1201–1330 (SSDD…SNPL), and 1342–1528 (ISKG…SNNT). Residues 259 to 307 (KQQQKQNSQQQQQQQQQQQQQQQQQQQQQQQQQQQQQQQQQQQKLNIHE) are a coiled coil. Composition is skewed to low complexity over residues 346–399 (QQHQ…NITP) and 406–428 (PSSVTSPISTSTNPPSNNPKPTS). Positions 429–444 (IGQIQSLHYHNPSLYQ) are enriched in polar residues. Composition is skewed to low complexity over residues 450 to 461 (NRNRGNNNNNNN) and 475 to 536 (SSTV…NTPN). Over residues 553 to 568 (GGIGGGGGGGSGGGGI) the composition is skewed to gly residues. Low complexity-rich tracts occupy residues 963–1048 (NNIN…TTTN), 1201–1248 (SSDD…TGGP), 1275–1284 (NSSNNNNTSS), 1299–1324 (SGSSTSSPSTLISTPSTLASTPPTTG), and 1346–1403 (SPAS…SVST). Residues 1417–1441 (LNLSSVSKTGQASTSTPNLLNLKNI) show a composition bias toward polar residues. Residues 1442–1478 (PTTTNNSNSTTTTTTTTPTGKPQFSLNLSSLSKSSSS) show a composition bias toward low complexity. The segment covering 1479 to 1491 (TETVPPSQPNQPI) has biased composition (polar residues). Positions 1509–1528 (STTTTTTTTTPPPINNSNNT) are enriched in low complexity. The region spanning 1730-2034 (FKDLKRVAKG…TKFIAIKPTI (305 aa)) is the Protein kinase domain. Residues 1736–1744 (VAKGAYGTV) and Lys1760 each bind ATP. Catalysis depends on Asp1858, which acts as the Proton acceptor. Residues 2130 to 2271 (RPSKVASFMY…LCRWGKQRRN (142 aa)) enclose the Tyrosine-protein phosphatase domain. The segment at 2379–2404 (NINNNNNNNSNNSKSKQQQQQQQNQN) is disordered.

It belongs to the protein kinase superfamily. Ser/Thr protein kinase family.

The enzyme catalyses L-seryl-[protein] + ATP = O-phospho-L-seryl-[protein] + ADP + H(+). The catalysed reaction is L-threonyl-[protein] + ATP = O-phospho-L-threonyl-[protein] + ADP + H(+). The sequence is that of Probable serine/threonine-protein kinase DDB_G0277071 from Dictyostelium discoideum (Social amoeba).